The primary structure comprises 573 residues: SHC-transforming protein 2 (573 aa).

One can recognise a PID domain in the interval 125 to 309 (LGPGVSYIVR…LEELAWGDDD (185 aa)). Residues 310–477 (AAADHNYYNS…PTEEQLRQEP (168 aa)) form a CH1 region. Phosphotyrosine occurs at positions 316, 317, and 395. Residues 478-569 (WYHGRMSRRA…ESELHLRGVV (92 aa)) enclose the SH2 domain.

In terms of assembly, interacts with the Trk receptors in a phosphotyrosine-dependent manner and MEGF12. Once activated, binds to GRB2. Post-translationally, phosphorylated on tyrosine by the Trk receptors. In terms of tissue distribution, expressed in brain. Expressed at high level in the hypothalamus and at low level in the caudate nucleus.

In terms of biological role, signaling adapter that couples activated growth factor receptors to signaling pathway in neurons. Involved in the signal transduction pathways of neurotrophin-activated Trk receptors in cortical neurons. The polypeptide is SHC-transforming protein 2 (Shc2) (Mus musculus (Mouse)).